We begin with the raw amino-acid sequence, 144 residues long: MNPQPSGMTWNLLLLTWLVALISTLSALFIGEVMGQAPCVLCWFQRAFMFPLTVILAIACYRSDFTVWRYALPLTVIGAALAFVHTLLYAGLIPQPIQPCTATGPSCSGAGMTLFGVVPLPALALFAFIIIAILLIIIRRRTTP.

A helical transmembrane segment spans residues 10–29 (WNLLLLTWLVALISTLSALF). Cysteine 39 and cysteine 42 are joined by a disulfide. 2 helical membrane-spanning segments follow: residues 44–63 (FQRAFMFPLTVILAIACYRS) and 70–87 (YALPLTVIGAALAFVHTL). Cysteine 100 and cysteine 107 are oxidised to a cystine. A helical membrane pass occupies residues 116–138 (GVVPLPALALFAFIIIAILLIII).

It belongs to the DsbB family. BdbC subfamily.

Its subcellular location is the cell inner membrane. Functionally, required for disulfide bond formation in some proteins. In Metapseudomonas resinovorans (Pseudomonas resinovorans), this protein is Probable disulfide formation protein.